Consider the following 87-residue polypeptide: Small ribosomal subunit protein bS20 (87 aa).

A disordered region spans residues 67 to 87 (HKNNGSRKASRLDAYVQSKQQ).

Belongs to the bacterial ribosomal protein bS20 family.

In terms of biological role, binds directly to 16S ribosomal RNA. The chain is Small ribosomal subunit protein bS20 from Metamycoplasma arthritidis (strain 158L3-1) (Mycoplasma arthritidis).